Here is a 678-residue protein sequence, read N- to C-terminus: DNA ligase (678 aa).

Residues 47–51 (DSDYD), 96–97 (SL), and glutamate 122 each bind NAD(+). Catalysis depends on lysine 124, which acts as the N6-AMP-lysine intermediate. 4 residues coordinate NAD(+): arginine 145, glutamate 182, lysine 300, and lysine 324. Cysteine 418, cysteine 421, cysteine 436, and cysteine 442 together coordinate Zn(2+). The 77-residue stretch at 602–678 (AYNESFTGKT…ILEDNLKDLL (77 aa)) folds into the BRCT domain.

It belongs to the NAD-dependent DNA ligase family. LigA subfamily. Mg(2+) serves as cofactor. Requires Mn(2+) as cofactor.

The catalysed reaction is NAD(+) + (deoxyribonucleotide)n-3'-hydroxyl + 5'-phospho-(deoxyribonucleotide)m = (deoxyribonucleotide)n+m + AMP + beta-nicotinamide D-nucleotide.. In terms of biological role, DNA ligase that catalyzes the formation of phosphodiester linkages between 5'-phosphoryl and 3'-hydroxyl groups in double-stranded DNA using NAD as a coenzyme and as the energy source for the reaction. It is essential for DNA replication and repair of damaged DNA. The polypeptide is DNA ligase (Francisella tularensis subsp. holarctica (strain FTNF002-00 / FTA)).